A 159-amino-acid chain; its full sequence is MRIGFGLDVHKLVENRKLILGGVEIPHDKGLLGHSDADVLIHAIMDAICGALCLGDIGKLFPDTDMKYKDIDSRVLLRKVFEIMDDMGYEIGNIDSTISCQKPKLRDYIDKMRENIAQDLHTNTFNISVKATTTEQLGFEGRCEGITANSVCILNKKDL.

Residues aspartate 8 and histidine 10 each coordinate a divalent metal cation. 4-CDP-2-C-methyl-D-erythritol 2-phosphate-binding positions include 8-10 (DVH) and 34-35 (HS). An a divalent metal cation-binding site is contributed by histidine 42. Residues 56-58 (DIG), 61-65 (FPDTD), 132-135 (TTTE), phenylalanine 139, and arginine 142 each bind 4-CDP-2-C-methyl-D-erythritol 2-phosphate.

This sequence belongs to the IspF family. Homotrimer. Requires a divalent metal cation as cofactor.

It catalyses the reaction 4-CDP-2-C-methyl-D-erythritol 2-phosphate = 2-C-methyl-D-erythritol 2,4-cyclic diphosphate + CMP. Its pathway is isoprenoid biosynthesis; isopentenyl diphosphate biosynthesis via DXP pathway; isopentenyl diphosphate from 1-deoxy-D-xylulose 5-phosphate: step 4/6. Its function is as follows. Involved in the biosynthesis of isopentenyl diphosphate (IPP) and dimethylallyl diphosphate (DMAPP), two major building blocks of isoprenoid compounds. Catalyzes the conversion of 4-diphosphocytidyl-2-C-methyl-D-erythritol 2-phosphate (CDP-ME2P) to 2-C-methyl-D-erythritol 2,4-cyclodiphosphate (ME-CPP) with a corresponding release of cytidine 5-monophosphate (CMP). This is 2-C-methyl-D-erythritol 2,4-cyclodiphosphate synthase from Finegoldia magna (strain ATCC 29328 / DSM 20472 / WAL 2508) (Peptostreptococcus magnus).